Consider the following 156-residue polypeptide: METYLPFVDDAAVDQAFEAWVDELVEEECGAMPSEGYHPEVPRVMAAKGRDAESGGIDLARYNDAGDVRLLKIVDSYLRHAEITLRELISKTIVNQWVISNDCQQSASGVMQAGIDKLQGQLDALEKYRRDVQVRYRRTHPDTVDASCMRLRDMYI.

As to quaternary structure, associated with the spliceosome.

It localises to the nucleus. Functionally, involved in pre-mRNA splicing. The polypeptide is Pre-mRNA-splicing factor SNT309 (SNT309) (Candida glabrata (strain ATCC 2001 / BCRC 20586 / JCM 3761 / NBRC 0622 / NRRL Y-65 / CBS 138) (Yeast)).